We begin with the raw amino-acid sequence, 199 residues long: Ribosome biogenesis protein RLP24 (199 aa).

A disordered region spans residues 147–182; sequence KEQERAESVSEQEESEEEEEDMEIDSDEEEEEQLEK. Residues 156-179 show a composition bias toward acidic residues; it reads SEQEESEEEEEDMEIDSDEEEEEQ. Ser-172 is modified (phosphoserine).

Belongs to the eukaryotic ribosomal protein eL24 family. As to quaternary structure, associated with nucleolar and cytoplasmic pre-60S particles. At the end of biogenesis it dissociates from cytoplasmic pre-60S particles and is likely to be exchanged for its ribosomal homolog, RPL24. Interacts (via C-terminus) with AFG2 (hexameric form); the interaction is direct, recruits AFG2 to pre-60S ribosomal particles and promotes AFG2 ATPase activity and RLP24 release from pre-60S ribosomal particles. Interacts with NOG1; the interaction is direct.

Its subcellular location is the cytoplasm. It localises to the nucleus. Involved in the biogenesis of the 60S ribosomal subunit. Ensures the docking of NOG1 to pre-60S ribosomal particles. Activates and recruits ATPase AFG2 to cytoplasmic pre-60S ribosomal particles. The polypeptide is Ribosome biogenesis protein RLP24 (RLP24) (Saccharomyces cerevisiae (strain ATCC 204508 / S288c) (Baker's yeast)).